The sequence spans 132 residues: MARDSLSDAGLHFDELNKLRILDPDVAQQTNELKEECRDFVDKIGHFQKVVGGLIELVDELAKETENEKMKAIGARNLLKSIAKQREAQQQQLYALIAEKKMQLERYRIEYEALCKVEAEQNEFIDQFNLQK.

A coiled-coil region spans residues 87–114 (EAQQQQLYALIAEKKMQLERYRIEYEAL).

It is found in the golgi apparatus. The protein resides in the cis-Golgi network. Its subcellular location is the cytoplasm. It localises to the cytoskeleton. The protein localises to the microtubule organizing center. It is found in the centrosome. The protein resides in the centriole. Its subcellular location is the cell projection. It localises to the cilium. The protein localises to the cytoplasmic vesicle. It is found in the secretory vesicle. The protein resides in the acrosome. Its function is as follows. Involved in ciliary process assembly. May play a role in the trafficking of ciliary membrane proteins from the Golgi complex to the cilium. Regulates the platelet-derived growth factor receptor-alpha (PDGFRA) signaling pathway. Plays an important role in spermatogenesis, particularly spermiogenesis, when germ cells form flagella. The chain is Intraflagellar transport protein 20 homolog (ift20) from Xenopus tropicalis (Western clawed frog).